Reading from the N-terminus, the 295-residue chain is Ribosomal RNA small subunit methyltransferase A (295 aa).

Residues Asn33, Val35, Gly60, Glu81, Asp111, and Asn129 each contribute to the S-adenosyl-L-methionine site.

The protein belongs to the class I-like SAM-binding methyltransferase superfamily. rRNA adenine N(6)-methyltransferase family. RsmA subfamily.

Its subcellular location is the cytoplasm. It carries out the reaction adenosine(1518)/adenosine(1519) in 16S rRNA + 4 S-adenosyl-L-methionine = N(6)-dimethyladenosine(1518)/N(6)-dimethyladenosine(1519) in 16S rRNA + 4 S-adenosyl-L-homocysteine + 4 H(+). Specifically dimethylates two adjacent adenosines (A1518 and A1519) in the loop of a conserved hairpin near the 3'-end of 16S rRNA in the 30S particle. May play a critical role in biogenesis of 30S subunits. The chain is Ribosomal RNA small subunit methyltransferase A from Streptomyces avermitilis (strain ATCC 31267 / DSM 46492 / JCM 5070 / NBRC 14893 / NCIMB 12804 / NRRL 8165 / MA-4680).